Here is a 155-residue protein sequence, read N- to C-terminus: Myelin basic protein (155 aa).

The tract at residues 1 to 72 (MASATTSDHA…HQGARRQTDD (72 aa)) is disordered. An N-acetylalanine; in forms C1, C2, C3 and C8 modification is found at alanine 2. At glutamine 12 the chain carries Deamidated glutamine; in forms C1, C2 and C3. Positions 37–49 (GSRKVPEKGKEPA) are enriched in basic and acidic residues. 2 positions are modified to phosphoserine; in forms C1, C2 and C3: serine 73 and serine 84. The disordered stretch occupies residues 113–155 (RAHYGAAGSSKSKDGFRGRRDGSGTLSSFFKMGKKGEGSPARR). Phosphoserine; in forms C1 and C3 is present on residues serine 121 and serine 122. Basic and acidic residues predominate over residues 123 to 134 (KSKDGFRGRRDG). 3 positions are modified to phosphoserine; in forms C1, C2 and C3: serine 135, serine 139, and serine 140.

Belongs to the myelin basic protein family. Post-translationally, several charge isomers are produced as a result of optional post-translational modifications, such as phosphorylation, deamidation and citrullination. Dogfish MBP contains four major components designated as C1, C2, C3 and C8. C1 and C3, but not C2 are phosphorylated at either Ser-121 or Ser-122; C2 is phosphorylated at 2 or 3 sites among Ser-135, Ser-139 and Ser-140. Hydroxyproline and citrulline are present but were not identified in either C1, C2 or C3, which suggests their presence in C8.

The protein localises to the myelin membrane. Functionally, this protein may function to maintain proper structure of myelin. This Squalus acanthias (Spiny dogfish) protein is Myelin basic protein (MBP).